Reading from the N-terminus, the 302-residue chain is Syntaxin-17 (302 aa).

S2 is subject to N-acetylserine. Topologically, residues 2–228 are cytoplasmic; that stretch reads SEDEEKVKLR…KNLGKAAKYK (227 aa). N6-acetyllysine is present on K41. The stretch at 53-123 forms a coiled coil; sequence EEHINAGRTV…EELKKQFNDE (71 aa). Y157 carries the post-translational modification Phosphotyrosine; by ABL1. One can recognise a t-SNARE coiled-coil homology domain in the interval 162–224; that stretch reads IPRDQNAAES…EEGTKNLGKA (63 aa). A helical transmembrane segment spans residues 229-249; that stretch reads LAALPVAGALIGGVVGGPIGL. A necessary and sufficient for localization to autophagosome region spans residues 229-275; sequence LAALPVAGALIGGVVGGPIGLLAGFKVAGIAAALGGGVLGFTGGKLI. Residues 250–254 lie on the Lumenal side of the membrane; sequence LAGFK. A helical transmembrane segment spans residues 255 to 275; it reads VAGIAAALGGGVLGFTGGKLI. Over 276-302 the chain is Cytoplasmic; sequence QRRKQKMMEKLASSCPDLPSQTDKKCS. S289 carries the phosphoserine modification. Residues 299 to 302 carry the Endoplasmic reticulum retention signal motif; that stretch reads KKCS.

Belongs to the syntaxin family. As to quaternary structure, forms a SNARE complex composed of VAMP8, SNAP29 and STX17 involved in fusion of autophagosome with lysosome. May interact with VTI1B. Probably interacts with BET1, SCFD1 and SEC22B. Interacts with PTPN2 and ABL1; involved in STX17 phosphorylation. Interacts with COPB1. Interacts with TMED9 and TMED10; the interaction is direct. Interacts with VAMP7. Interacts with RUBCNL/PACER; promoting targeting of RUBCNL/PACER to autophagosome. Interacts with VAMP8, SNAP29, VPS39 and VPS41; these interactions are increased in the absence of TMEM39A. Interacts with IRGM; promoting STX17 recruitment to autophagosomes. Interacts with ATG8 proteins GABARAP and MAP1LC3B. Interacts with RNF115; this interaction enhances STX17 stability which in turn promotes autophagosome maturation. Interacts with RAB39A (GTP-bound); the interaction promotes autophagosome-lysosome membrane fusion driven by STX17-SNAP29-VAMP8. Interacts with RAB39B; the interaction may promote a different fonction in autophagy as compared with RAB39A. Post-translationally, phosphorylated at Tyr-157 probably by ABL1. Dephosphorylation by PTPN2; regulates exit from the endoplasmic reticulum.

It is found in the endoplasmic reticulum membrane. The protein localises to the smooth endoplasmic reticulum membrane. Its subcellular location is the endoplasmic reticulum-Golgi intermediate compartment membrane. It localises to the cytoplasmic vesicle. The protein resides in the autophagosome membrane. It is found in the COPII-coated vesicle membrane. The protein localises to the cytoplasm. Its subcellular location is the cytosol. It localises to the mitochondrion membrane. The protein resides in the autolysosome membrane. Its function is as follows. SNAREs, soluble N-ethylmaleimide-sensitive factor-attachment protein receptors, are essential proteins for fusion of cellular membranes. SNAREs localized on opposing membranes assemble to form a trans-SNARE complex, an extended, parallel four alpha-helical bundle that drives membrane fusion. STX17 is a SNARE of the autophagosome involved in autophagy through the direct control of autophagosome membrane fusion with the lysosome membrane. May also play a role in the early secretory pathway where it may maintain the architecture of the endoplasmic reticulum-Golgi intermediate compartment/ERGIC and Golgi and/or regulate transport between the endoplasmic reticulum, the ERGIC and the Golgi. This chain is Syntaxin-17, found in Bos taurus (Bovine).